A 402-amino-acid chain; its full sequence is Speedy protein E6 (402 aa).

The segment at 1-89 (MDRTETRFRK…EEPEKELAPE (89 aa)) is disordered. Residues 16-39 (GKITTSRQPHPQNEQSPQRSTSGY) are compositionally biased toward polar residues. Positions 76 to 89 (DESEEEPEKELAPE) are enriched in acidic residues.

This sequence belongs to the Speedy/Ringo family.

In Homo sapiens (Human), this protein is Speedy protein E6 (SPDYE6).